Reading from the N-terminus, the 175-residue chain is Sec-independent protein translocase protein TatB (175 aa).

Residues 1-21 (MLDLGLSKMALIGVVALVVLG) form a helical membrane-spanning segment. Residues 99–115 (GDPAAADASGGLGATSD) show a composition bias toward low complexity. The interval 99-118 (GDPAAADASGGLGATSDEPS) is disordered.

This sequence belongs to the TatB family. The Tat system comprises two distinct complexes: a TatABC complex, containing multiple copies of TatA, TatB and TatC subunits, and a separate TatA complex, containing only TatA subunits. Substrates initially bind to the TatABC complex, which probably triggers association of the separate TatA complex to form the active translocon.

The protein localises to the cell inner membrane. Part of the twin-arginine translocation (Tat) system that transports large folded proteins containing a characteristic twin-arginine motif in their signal peptide across membranes. Together with TatC, TatB is part of a receptor directly interacting with Tat signal peptides. TatB may form an oligomeric binding site that transiently accommodates folded Tat precursor proteins before their translocation. The sequence is that of Sec-independent protein translocase protein TatB from Burkholderia thailandensis (strain ATCC 700388 / DSM 13276 / CCUG 48851 / CIP 106301 / E264).